Consider the following 424-residue polypeptide: Phosphomethylpyrimidine synthase 2 (424 aa).

Substrate-binding positions include Asn-65, Met-94, Tyr-123, His-162, 184–186 (SRG), 225–228 (DGLR), and Glu-264. His-268 contributes to the Zn(2+) binding site. Tyr-291 provides a ligand contact to substrate. His-332 serves as a coordination point for Zn(2+). [4Fe-4S] cluster contacts are provided by Cys-408, Cys-411, and Cys-415.

The protein belongs to the ThiC family. Requires [4Fe-4S] cluster as cofactor.

The catalysed reaction is 5-amino-1-(5-phospho-beta-D-ribosyl)imidazole + S-adenosyl-L-methionine = 4-amino-2-methyl-5-(phosphooxymethyl)pyrimidine + CO + 5'-deoxyadenosine + formate + L-methionine + 3 H(+). It participates in cofactor biosynthesis; thiamine diphosphate biosynthesis. Its function is as follows. Catalyzes the synthesis of the hydroxymethylpyrimidine phosphate (HMP-P) moiety of thiamine from aminoimidazole ribotide (AIR) in a radical S-adenosyl-L-methionine (SAM)-dependent reaction. The protein is Phosphomethylpyrimidine synthase 2 of Methanothermobacter thermautotrophicus (strain ATCC 29096 / DSM 1053 / JCM 10044 / NBRC 100330 / Delta H) (Methanobacterium thermoautotrophicum).